The primary structure comprises 341 residues: Holliday junction branch migration complex subunit RuvB (341 aa).

The interval 1–182 (MTDADPTLRP…FGIPTRLLFY (182 aa)) is large ATPase domain (RuvB-L). ATP is bound by residues leucine 21, arginine 22, glycine 63, lysine 66, threonine 67, threonine 68, 129-131 (EDF), arginine 172, tyrosine 182, and arginine 219. Threonine 67 provides a ligand contact to Mg(2+). The tract at residues 183 to 253 (TVDELFEIVS…LADHALTRLG (71 aa)) is small ATPAse domain (RuvB-S). Positions 256 to 341 (QLGLDGADRR…RPPGQSDLFG (86 aa)) are head domain (RuvB-H). Residues arginine 292, arginine 311, and arginine 316 each coordinate DNA.

Belongs to the RuvB family. Homohexamer. Forms an RuvA(8)-RuvB(12)-Holliday junction (HJ) complex. HJ DNA is sandwiched between 2 RuvA tetramers; dsDNA enters through RuvA and exits via RuvB. An RuvB hexamer assembles on each DNA strand where it exits the tetramer. Each RuvB hexamer is contacted by two RuvA subunits (via domain III) on 2 adjacent RuvB subunits; this complex drives branch migration. In the full resolvosome a probable DNA-RuvA(4)-RuvB(12)-RuvC(2) complex forms which resolves the HJ.

The protein localises to the cytoplasm. It catalyses the reaction ATP + H2O = ADP + phosphate + H(+). Functionally, the RuvA-RuvB-RuvC complex processes Holliday junction (HJ) DNA during genetic recombination and DNA repair, while the RuvA-RuvB complex plays an important role in the rescue of blocked DNA replication forks via replication fork reversal (RFR). RuvA specifically binds to HJ cruciform DNA, conferring on it an open structure. The RuvB hexamer acts as an ATP-dependent pump, pulling dsDNA into and through the RuvAB complex. RuvB forms 2 homohexamers on either side of HJ DNA bound by 1 or 2 RuvA tetramers; 4 subunits per hexamer contact DNA at a time. Coordinated motions by a converter formed by DNA-disengaged RuvB subunits stimulates ATP hydrolysis and nucleotide exchange. Immobilization of the converter enables RuvB to convert the ATP-contained energy into a lever motion, pulling 2 nucleotides of DNA out of the RuvA tetramer per ATP hydrolyzed, thus driving DNA branch migration. The RuvB motors rotate together with the DNA substrate, which together with the progressing nucleotide cycle form the mechanistic basis for DNA recombination by continuous HJ branch migration. Branch migration allows RuvC to scan DNA until it finds its consensus sequence, where it cleaves and resolves cruciform DNA. This is Holliday junction branch migration complex subunit RuvB from Ruegeria pomeroyi (strain ATCC 700808 / DSM 15171 / DSS-3) (Silicibacter pomeroyi).